Here is a 346-residue protein sequence, read N- to C-terminus: Methylthioribose-1-phosphate isomerase (346 aa).

Residues 46 to 48, Arg89, and Gln196 each bind substrate; that span reads RGA. Asp237 (proton donor) is an active-site residue. 247-248 lines the substrate pocket; it reads NK.

It belongs to the eIF-2B alpha/beta/delta subunits family. MtnA subfamily.

It carries out the reaction 5-(methylsulfanyl)-alpha-D-ribose 1-phosphate = 5-(methylsulfanyl)-D-ribulose 1-phosphate. Its pathway is amino-acid biosynthesis; L-methionine biosynthesis via salvage pathway; L-methionine from S-methyl-5-thio-alpha-D-ribose 1-phosphate: step 1/6. Functionally, catalyzes the interconversion of methylthioribose-1-phosphate (MTR-1-P) into methylthioribulose-1-phosphate (MTRu-1-P). This is Methylthioribose-1-phosphate isomerase from Geotalea daltonii (strain DSM 22248 / JCM 15807 / FRC-32) (Geobacter daltonii).